Here is a 297-residue protein sequence, read N- to C-terminus: MEPAAGAQGPHQHEPISFGIDQILSGPEQDGAPPPPPPPPPPPPPPPPPPRGPDGAAFLGGPRGGAPYPALPGPFPAIAAPFEESGPYGVNLSLAPGGVIRVPAHRPIPGAVPPPVPSAIPAVPGLGGLSFPWMESSRRFVKERFTAAAALTPFTVTRRIGHPYQNRTPPKRKKPRTSFSRVQICELEKRFHRQKYLASAERAALAKSLKMTDAQVKTWFQNRRTKWRRQTAEEREAERQQASRLMLQLQHDAFQKSLNESIQPDPLCLHNSSLFALQNLQPWEEESAKIPPVTSLV.

Positions 1–68 are disordered; it reads MEPAAGAQGP…LGGPRGGAPY (68 aa). The segment covering 32–52 has biased composition (pro residues); that stretch reads APPPPPPPPPPPPPPPPPPRG. Residues 172–231 constitute a DNA-binding region (homeobox); it reads RKKPRTSFSRVQICELEKRFHRQKYLASAERAALAKSLKMTDAQVKTWFQNRRTKWRRQT.

As to expression, expression is restricted to neurons in the peripheral and central nervous system.

The protein resides in the nucleus. Functionally, seems to be involved in the development of cranial sensory innervation from peripheral ganglia. In Gallus gallus (Chicken), this protein is T-cell leukemia homeobox protein 3 (TLX3).